Here is a 136-residue protein sequence, read N- to C-terminus: Small ribosomal subunit protein uS8c (136 aa).

This sequence belongs to the universal ribosomal protein uS8 family. Part of the 30S ribosomal subunit.

Its subcellular location is the plastid. The protein localises to the chloroplast. Functionally, one of the primary rRNA binding proteins, it binds directly to 16S rRNA central domain where it helps coordinate assembly of the platform of the 30S subunit. The protein is Small ribosomal subunit protein uS8c (rps8) of Tetradesmus obliquus (Green alga).